Reading from the N-terminus, the 315-residue chain is MENTQHSLPIDHVIDIGDNRYIRVWETKPKNKETKRNNTIVIASGFARRMDHFAGLAEYLANNGFRVIRYDSLNHVGLSSGEIKQFSMSVGKHSLLTVIDWLKERNINNIGLIASSLSARIAYEVAAEIDLSFLITAVGVVNLRSTLEKALKYDYLQMEVNTIPEDLIFEGHNLGSKVFVTDCFENNWDSLDSTINKICELDIPFIAFTSDGDDWVCQHEVKHLVSNVKSDKKKIYSLVGSSHDLGENLVVLRNFYQSMTKAAVSLDRQLVELVDEIIEPNFEDLTVITVNERRLKNKIENEIINRLADRVLASV.

Active-site charge relay system residues include Ser-116, Asp-213, and His-243.

The protein belongs to the LuxD family.

Its pathway is lipid metabolism; fatty acid reduction for biolumincescence. In terms of biological role, acyl transferase is part of the fatty acid reductase system required for aldehyde biosynthesis; it produces fatty acids for the luminescent reaction. This chain is Acyl transferase, found in Photobacterium leiognathi.